Reading from the N-terminus, the 892-residue chain is E3 ubiquitin ligase PQT3-like (892 aa).

In terms of domain architecture, DWNN spans 3 to 76 (IYYKFKSARD…NTSVLIRRVP (74 aa)). The CCHC-type zinc-finger motif lies at 210-224 (CHRCNIPGHFIQHCP). S285 bears the Phosphoserine mark. The segment at 295 to 333 (CPLCKEVMKDAALTSKCCYKSFCDKCIRDHIISKSMCVC) adopts an RING-type; degenerate zinc-finger fold. 3 disordered regions span residues 375–408 (DLESARCPPPKALSPTTSVASKGEKKPVLSNNND), 459–493 (TQAPKEEMQQQVAAGEPGKKKKKKPRVPGNDMQWN), and 623–892 (MLRK…RSRA). S404 is modified (phosphoserine). Positions 623 to 644 (MLRKRENERRPEGGKMFRDGEN) are enriched in basic and acidic residues. Residues 647–666 (MMMNNGTSASASSINPNKSR) are compositionally biased toward polar residues. Positions 674–692 (HDYDRRRRPEKRLSPEHPP) are enriched in basic and acidic residues. The short motif at 693–700 (TRKNISPS) is the Nuclear localization signal element. Residues 708–745 (ERYPDERDRQRDRERSRHQDVDREHDRTRDRRDEDRSR) are compositionally biased toward basic and acidic residues. Over residues 810–832 (SSSSTSVTDPSASASAAAAVGTS) the composition is skewed to low complexity. S866 bears the Phosphoserine mark. Basic and acidic residues predominate over residues 875-892 (SEDKLRYSKRGKGERSRA).

The protein resides in the nucleus. The catalysed reaction is S-ubiquitinyl-[E2 ubiquitin-conjugating enzyme]-L-cysteine + [acceptor protein]-L-lysine = [E2 ubiquitin-conjugating enzyme]-L-cysteine + N(6)-ubiquitinyl-[acceptor protein]-L-lysine.. In Arabidopsis thaliana (Mouse-ear cress), this protein is E3 ubiquitin ligase PQT3-like.